We begin with the raw amino-acid sequence, 329 residues long: Serine/threonine-protein phosphatase PP1-alpha (329 aa).

Mn(2+) contacts are provided by aspartate 64, histidine 66, aspartate 92, and asparagine 124. The active-site Proton donor is the histidine 125. The Mn(2+) site is built by histidine 173 and histidine 248. Residues 309 to 329 are disordered; sequence GMNSGRPAVGGGRPGTTAGKK.

It belongs to the PPP phosphatase family. PP-1 subfamily. In terms of assembly, interacts with lab-1; the interaction is direct. Interacts with knl-1; the interaction is direct. The cofactor is Mn(2+).

The catalysed reaction is O-phospho-L-seryl-[protein] + H2O = L-seryl-[protein] + phosphate. It catalyses the reaction O-phospho-L-threonyl-[protein] + H2O = L-threonyl-[protein] + phosphate. Its function is as follows. Serine/threonine-protein phosphatase which antagonizes the function of air-2 in the regulation of chromosome cohesion. Dephosphorylates histone H3 at 'Ser-10'. Dephosphorylates translation initiation factor eIF2alpha. Involved in the activation of chloride channel clh-3 during cell swelling and meiotic maturation. In Caenorhabditis briggsae, this protein is Serine/threonine-protein phosphatase PP1-alpha (gsp-1).